The primary structure comprises 185 residues: Adenine phosphoribosyltransferase (185 aa).

Belongs to the purine/pyrimidine phosphoribosyltransferase family. In terms of assembly, homodimer.

The protein resides in the cytoplasm. The catalysed reaction is AMP + diphosphate = 5-phospho-alpha-D-ribose 1-diphosphate + adenine. Its pathway is purine metabolism; AMP biosynthesis via salvage pathway; AMP from adenine: step 1/1. Functionally, catalyzes a salvage reaction resulting in the formation of AMP, that is energically less costly than de novo synthesis. This Pectobacterium carotovorum subsp. carotovorum (strain PC1) protein is Adenine phosphoribosyltransferase.